An 859-amino-acid polypeptide reads, in one-letter code: Leucine--tRNA ligase (859 aa).

A 'HIGH' region motif is present at residues 42 to 52; the sequence is PYPSGRLHMGH. The 'KMSKS' region motif lies at 618–622; sequence KMSKS. Position 621 (lysine 621) interacts with ATP.

Belongs to the class-I aminoacyl-tRNA synthetase family.

The protein localises to the cytoplasm. It catalyses the reaction tRNA(Leu) + L-leucine + ATP = L-leucyl-tRNA(Leu) + AMP + diphosphate. The chain is Leucine--tRNA ligase from Shewanella woodyi (strain ATCC 51908 / MS32).